The following is a 323-amino-acid chain: MNPNLLEKDLRGKETTNGSIRYKEANNFRSLPNSHTAACKTSLNNPSISRNHPHNKSASVLESEDEHGNERGENEKSLRMRGKSGINTKVCSRGHWRPTEDAKLKELVAQFGPQNWNLISNHLLGRSGKSCRLRWFNQLDPRINKRAFTEEEEFRLLAAHRAYGNKWALISRLFPGRTDNAVKNHWHVIMARRTRESQRQRQQPPPTLSRDAEMTVSSSCRYNQGKFINEEDDDDDVSAVSTCTTELSLTPPSSAYQPRFFNYDSTLASGKDGQCVQRAEVNGIYGKKMDHQNHHTISVSERKVEMKMRSGYYYFDFLGVGAS.

Residues 1 to 14 (MNPNLLEKDLRGKE) are compositionally biased toward basic and acidic residues. The segment at 1 to 84 (MNPNLLEKDL…EKSLRMRGKS (84 aa)) is disordered. Over residues 27–60 (NFRSLPNSHTAACKTSLNNPSISRNHPHNKSASV) the composition is skewed to polar residues. Residues 66–78 (EHGNERGENEKSL) show a composition bias toward basic and acidic residues. HTH myb-type domains lie at 88–139 (TKVC…FNQL) and 140–194 (DPRI…ARRT). 2 DNA-binding regions (H-T-H motif) span residues 116–138 (WNLI…WFNQ) and 167–190 (WALI…HVIM). The tract at residues 192–217 (RRTRESQRQRQQPPPTLSRDAEMTVS) is disordered.

Forms homodimer. Interacts with the dephosphorylated active form of BES1 in the nucleus of quiescent center (QC) cells. Interacts with BPM1, BPM2, BPM3, BPM4, BPM5 and BPM6 at the promoter of FLOWERING LOCUS T (FT). In terms of tissue distribution, mostly expressed in flowers (at protein level) and siliques, and, to a lower extent, in roots, stems and leaves. Expressed in embryos (e.g. heart and torpedo stages) and cotyledons, and, at low levels, in roots and inflorescence. Accumulates specifically in root apical meristem quiescent center (QC) and vascular initial cells.

Its subcellular location is the nucleus. It localises to the cytoplasm. The protein localises to the cytosol. Its function is as follows. Acts as a cell-specific local repressor of quiescent center (QC) self-renewal by cell divisions in the primary root. Counteracts brassinosteroid (BR)-mediated cell division in the QC cells. Regulates maternally seed size, especially before the heart stage, promoting both endothelial cells expansion and cell number in the outer integument layer of the seed coat. Modulates the expression of genes involved in cell wall metabolism such as cell division and expansion. Negative regulator of flowering via the repression of FT transcription. The sequence is that of Transcription factor MYB56 from Arabidopsis thaliana (Mouse-ear cress).